A 415-amino-acid chain; its full sequence is Lipid-A-disaccharide synthase (415 aa).

The interval 1 to 21 is disordered; the sequence is MNSLPESGSDGQSSADPSQKA.

This sequence belongs to the LpxB family.

The enzyme catalyses a lipid X + a UDP-2-N,3-O-bis[(3R)-3-hydroxyacyl]-alpha-D-glucosamine = a lipid A disaccharide + UDP + H(+). It functions in the pathway bacterial outer membrane biogenesis; LPS lipid A biosynthesis. In terms of biological role, condensation of UDP-2,3-diacylglucosamine and 2,3-diacylglucosamine-1-phosphate to form lipid A disaccharide, a precursor of lipid A, a phosphorylated glycolipid that anchors the lipopolysaccharide to the outer membrane of the cell. In Gluconobacter oxydans (strain 621H) (Gluconobacter suboxydans), this protein is Lipid-A-disaccharide synthase.